The following is a 512-amino-acid chain: NAD(P)H-quinone oxidoreductase subunit 2 B, chloroplastic (512 aa).

The next 14 helical transmembrane spans lie at 31–51 (FIFP…IDLT), 57–77 (IPWL…ALLF), 99–119 (IFQF…VEYI), 124–144 (MAIT…MFLC), 149–169 (LITI…LSGY), 183–203 (YLLM…WLYG), 229–249 (ISIA…LAPF), 261–281 (PTPV…ALAT), 295–315 (WHLL…LIAI), 323–343 (MLAY…IVGD), 354–374 (YMLF…LFGL), 395–415 (ALSL…AGFF), 418–438 (LYLF…IGLL), and 484–504 (MIVC…IIAI).

This sequence belongs to the complex I subunit 2 family. In terms of assembly, NDH is composed of at least 16 different subunits, 5 of which are encoded in the nucleus.

The protein localises to the plastid. It is found in the chloroplast thylakoid membrane. It catalyses the reaction a plastoquinone + NADH + (n+1) H(+)(in) = a plastoquinol + NAD(+) + n H(+)(out). The catalysed reaction is a plastoquinone + NADPH + (n+1) H(+)(in) = a plastoquinol + NADP(+) + n H(+)(out). Functionally, NDH shuttles electrons from NAD(P)H:plastoquinone, via FMN and iron-sulfur (Fe-S) centers, to quinones in the photosynthetic chain and possibly in a chloroplast respiratory chain. The immediate electron acceptor for the enzyme in this species is believed to be plastoquinone. Couples the redox reaction to proton translocation, and thus conserves the redox energy in a proton gradient. The protein is NAD(P)H-quinone oxidoreductase subunit 2 B, chloroplastic of Arabidopsis thaliana (Mouse-ear cress).